The sequence spans 320 residues: MVKNIGVLTSGGDAPGMNAAVRAVVRTALHYDVGVYGIYNGYLGLYRNEIQPMTRRSVADTINRGGTFLGSARFPEFKEEAVREEAIKNLRKHEIDALVVVGGDGSYMGAKKLTEMGFPCIGLPGTIDNDVAGTDYTIGYFTALNTVLDALDRLRDTSSSHKRISVVEIMGRHCGDLTVWSAIGSGAEYAIVPEMPFDEDKFLEQLRDQVGHGKNHAIVCITEKITDVNRLAKRIEQETGLETRATVLGHIQRGGAPTAFDRILASRMGAYAVELLRQGYGGRCVGIQANELVHHDIIDALENMSRPFKDCLLDLAHRLA.

Residue glycine 12 coordinates ATP. Residue 22-26 (RAVVR) participates in ADP binding. Residues 73 to 74 (RF) and 103 to 106 (GDGS) each bind ATP. Aspartate 104 contacts Mg(2+). 126–128 (TID) serves as a coordination point for substrate. Residue aspartate 128 is the Proton acceptor of the active site. An ADP-binding site is contributed by arginine 155. Substrate contacts are provided by residues arginine 163 and 170 to 172 (MGR). ADP is bound by residues 186-188 (GAE) and 214-216 (KNH). Substrate is bound by residues glutamate 223, arginine 244, and 250–253 (HIQR).

This sequence belongs to the phosphofructokinase type A (PFKA) family. ATP-dependent PFK group I subfamily. Prokaryotic clade 'B1' sub-subfamily. As to quaternary structure, homotetramer. Mg(2+) serves as cofactor.

The protein resides in the cytoplasm. The catalysed reaction is beta-D-fructose 6-phosphate + ATP = beta-D-fructose 1,6-bisphosphate + ADP + H(+). It participates in carbohydrate degradation; glycolysis; D-glyceraldehyde 3-phosphate and glycerone phosphate from D-glucose: step 3/4. With respect to regulation, allosterically activated by ADP and other diphosphonucleosides, and allosterically inhibited by phosphoenolpyruvate. Catalyzes the phosphorylation of D-fructose 6-phosphate to fructose 1,6-bisphosphate by ATP, the first committing step of glycolysis. The chain is ATP-dependent 6-phosphofructokinase from Teredinibacter turnerae (strain ATCC 39867 / T7901).